Reading from the N-terminus, the 163-residue chain is Neurotrophin-3 (163 aa).

The first 3 residues, 1–3, serve as a signal peptide directing secretion; sequence IQS. A propeptide spanning residues 4–119 is cleaved from the precursor; sequence TSMDQGILTE…ALNRTSRRKR (116 aa). 2 disordered regions span residues 38-60 and 90-131; these read ARTKDGTQTTVKKSEAEADATAS and LLSE…YSVC. N-linked (GlcNAc...) asparagine glycosylation occurs at asparagine 112.

It belongs to the NGF-beta family.

It is found in the secreted. In terms of biological role, seems to promote the survival of visceral and proprioceptive sensory neurons. This is Neurotrophin-3 (NTF3) from Eunectes notaeus (Yellow anaconda).